The following is a 630-amino-acid chain: Telomere repeat-binding protein 5 (630 aa).

3 disordered regions span residues 1-38 (MVLQKRPDYGFNGYEVPHTPRAARSPRKSAFKKKSENH), 56-78 (EGGNSSSSSNNTSGNNEDQCAVK), and 308-327 (YTASQSEETNKNEGQSGSPR). Over residues 57–71 (GGNSSSSSNNTSGNN) the composition is skewed to low complexity. Over residues 309-325 (TASQSEETNKNEGQSGS) the composition is skewed to polar residues. The Ubiquitin-like domain maps to 354 to 433 (VKLGIKSFRV…SDTLGFCLEP (80 aa)). A disordered region spans residues 463–489 (LPSPGKHAKPSNSVESDLDSKPSAPNR). An HTH myb-type domain is found at 523–582 (AQRRIRRPFSVAEVEALVQAVERLGTGRWRDVKLRAFDNAKHRTYVDLKDKWKTLVHTAR). The H-T-H motif DNA-binding region spans 551 to 578 (WRDVKLRAFDNAKHRTYVDLKDKWKTLV).

As to quaternary structure, homodimer. In terms of tissue distribution, expressed ubiquitously.

The protein resides in the nucleus. In terms of biological role, binds specifically to the plant telomeric double-stranded DNA sequences. At least 6 repeats of telomeric sequences are required for binding. This Arabidopsis thaliana (Mouse-ear cress) protein is Telomere repeat-binding protein 5 (TRP5).